The following is a 159-amino-acid chain: Ankyrin repeat domain-containing protein 37 (159 aa).

ANK repeat units follow at residues 1–25, 30–59, and 63–92; these read MLLL…SVNA, QEQS…DLNQ, and LGET…QIGV. The short motif at 130-150 is the Nuclear localization signal element; it reads EQQERDPRAPVLRQKRSFRTV.

In terms of processing, ubiquitinated by the CRL2(FEM1B) complex, leading to its degradation. Expressed testis, ovary, uterus, kidney, liver, but not in other tissues.

It localises to the nucleus. Its subcellular location is the cytoplasm. This chain is Ankyrin repeat domain-containing protein 37, found in Mus musculus (Mouse).